Reading from the N-terminus, the 300-residue chain is Ribonuclease HIII (300 aa).

One can recognise an RNase H type-2 domain in the interval 86–300 (RSRIGVDESG…FNEVLGSGNQ (215 aa)). Residues D92, E93, and D196 each contribute to the a divalent metal cation site.

The protein belongs to the RNase HII family. RnhC subfamily. It depends on Mn(2+) as a cofactor. Requires Mg(2+) as cofactor.

The protein localises to the cytoplasm. It carries out the reaction Endonucleolytic cleavage to 5'-phosphomonoester.. In terms of biological role, endonuclease that specifically degrades the RNA of RNA-DNA hybrids. The protein is Ribonuclease HIII of Chlamydia trachomatis serovar L2 (strain ATCC VR-902B / DSM 19102 / 434/Bu).